The following is a 311-amino-acid chain: tRNA-cytidine(32) 2-sulfurtransferase (311 aa).

The short motif at 45 to 50 is the PP-loop motif element; the sequence is SGGKDS. [4Fe-4S] cluster contacts are provided by Cys120, Cys123, and Cys211.

Belongs to the TtcA family. Homodimer. Requires Mg(2+) as cofactor. It depends on [4Fe-4S] cluster as a cofactor.

The protein resides in the cytoplasm. The catalysed reaction is cytidine(32) in tRNA + S-sulfanyl-L-cysteinyl-[cysteine desulfurase] + AH2 + ATP = 2-thiocytidine(32) in tRNA + L-cysteinyl-[cysteine desulfurase] + A + AMP + diphosphate + H(+). Its pathway is tRNA modification. In terms of biological role, catalyzes the ATP-dependent 2-thiolation of cytidine in position 32 of tRNA, to form 2-thiocytidine (s(2)C32). The sulfur atoms are provided by the cysteine/cysteine desulfurase (IscS) system. The polypeptide is tRNA-cytidine(32) 2-sulfurtransferase (Shewanella halifaxensis (strain HAW-EB4)).